The sequence spans 333 residues: Galactinol synthase 5 (333 aa).

Lysine 103 is a catalytic residue. Mn(2+)-binding residues include aspartate 119, aspartate 121, and histidine 257.

The protein belongs to the glycosyltransferase 8 family. Galactosyltransferase subfamily. Requires a divalent metal cation as cofactor.

The protein resides in the cytoplasm. It catalyses the reaction myo-inositol + UDP-alpha-D-galactose = alpha-D-galactosyl-(1-&gt;3)-1D-myo-inositol + UDP + H(+). Functionally, galactinol synthase involved in the biosynthesis of raffinose family oligosaccharides (RFOs) that function as osmoprotectants. May promote plant stress tolerance. The polypeptide is Galactinol synthase 5 (GOLS5) (Arabidopsis thaliana (Mouse-ear cress)).